Reading from the N-terminus, the 620-residue chain is 1-deoxy-D-xylulose-5-phosphate synthase (620 aa).

Thiamine diphosphate is bound by residues H80 and 121 to 123 (GHS). Residue D152 coordinates Mg(2+). Residues 153 to 154 (GA), N181, Y288, and E370 contribute to the thiamine diphosphate site. Mg(2+) is bound at residue N181.

It belongs to the transketolase family. DXPS subfamily. Homodimer. Mg(2+) is required as a cofactor. Thiamine diphosphate serves as cofactor.

It carries out the reaction D-glyceraldehyde 3-phosphate + pyruvate + H(+) = 1-deoxy-D-xylulose 5-phosphate + CO2. Its pathway is metabolic intermediate biosynthesis; 1-deoxy-D-xylulose 5-phosphate biosynthesis; 1-deoxy-D-xylulose 5-phosphate from D-glyceraldehyde 3-phosphate and pyruvate: step 1/1. Its function is as follows. Catalyzes the acyloin condensation reaction between C atoms 2 and 3 of pyruvate and glyceraldehyde 3-phosphate to yield 1-deoxy-D-xylulose-5-phosphate (DXP). This chain is 1-deoxy-D-xylulose-5-phosphate synthase, found in Escherichia coli (strain 55989 / EAEC).